The primary structure comprises 445 residues: Proline--tRNA ligase (445 aa).

Belongs to the class-II aminoacyl-tRNA synthetase family. ProS type 2 subfamily. Homodimer.

The protein localises to the cytoplasm. The enzyme catalyses tRNA(Pro) + L-proline + ATP = L-prolyl-tRNA(Pro) + AMP + diphosphate. Its function is as follows. Catalyzes the attachment of proline to tRNA(Pro) in a two-step reaction: proline is first activated by ATP to form Pro-AMP and then transferred to the acceptor end of tRNA(Pro). The protein is Proline--tRNA ligase of Caulobacter sp. (strain K31).